The chain runs to 671 residues: Phenol 2-monooxygenase (671 aa).

Residues 10 to 43 (DVLIVGAGPAGVMAAAHLLSYGTTARPHRVRIFD) and 295 to 305 (LQEGRVFLAGD) contribute to the FAD site.

The protein belongs to the PheA/TfdB FAD monooxygenase family. It depends on FAD as a cofactor.

It localises to the cytoplasm. The enzyme catalyses phenol + NADPH + O2 + H(+) = catechol + NADP(+) + H2O. It functions in the pathway aromatic compound metabolism; phenol degradation. Hydroxylates phenol to catechol. Also acts on cresols. The protein is Phenol 2-monooxygenase (tbuD) of Ralstonia pickettii (Burkholderia pickettii).